We begin with the raw amino-acid sequence, 551 residues long: Dihydroxy-acid dehydratase (551 aa).

Mg(2+) is bound at residue aspartate 78. [2Fe-2S] cluster is bound at residue cysteine 119. Positions 120 and 121 each coordinate Mg(2+). Lysine 121 is subject to N6-carboxylysine. Cysteine 191 is a [2Fe-2S] cluster binding site. Mg(2+) is bound at residue glutamate 441. Serine 467 functions as the Proton acceptor in the catalytic mechanism.

The protein belongs to the IlvD/Edd family. In terms of assembly, homodimer. It depends on [2Fe-2S] cluster as a cofactor. Requires Mg(2+) as cofactor.

The enzyme catalyses (2R)-2,3-dihydroxy-3-methylbutanoate = 3-methyl-2-oxobutanoate + H2O. The catalysed reaction is (2R,3R)-2,3-dihydroxy-3-methylpentanoate = (S)-3-methyl-2-oxopentanoate + H2O. It participates in amino-acid biosynthesis; L-isoleucine biosynthesis; L-isoleucine from 2-oxobutanoate: step 3/4. Its pathway is amino-acid biosynthesis; L-valine biosynthesis; L-valine from pyruvate: step 3/4. In terms of biological role, functions in the biosynthesis of branched-chain amino acids. Catalyzes the dehydration of (2R,3R)-2,3-dihydroxy-3-methylpentanoate (2,3-dihydroxy-3-methylvalerate) into 2-oxo-3-methylpentanoate (2-oxo-3-methylvalerate) and of (2R)-2,3-dihydroxy-3-methylbutanoate (2,3-dihydroxyisovalerate) into 2-oxo-3-methylbutanoate (2-oxoisovalerate), the penultimate precursor to L-isoleucine and L-valine, respectively. This Pyrococcus furiosus (strain ATCC 43587 / DSM 3638 / JCM 8422 / Vc1) protein is Dihydroxy-acid dehydratase.